Reading from the N-terminus, the 209-residue chain is B3 domain-containing protein At2g31420 (209 aa).

Residues 101–198 (LSKLEKSDFL…KLCFALSSPT (98 aa)) constitute a DNA-binding region (TF-B3).

Its subcellular location is the nucleus. The polypeptide is B3 domain-containing protein At2g31420 (Arabidopsis thaliana (Mouse-ear cress)).